Reading from the N-terminus, the 155-residue chain is Small ribosomal subunit protein bS6 (155 aa).

The segment at V94 to S155 is disordered. Residues P103 to Q112 show a composition bias toward polar residues. The span at A113 to T141 shows a compositional bias: basic and acidic residues.

The protein belongs to the bacterial ribosomal protein bS6 family.

In terms of biological role, binds together with bS18 to 16S ribosomal RNA. The chain is Small ribosomal subunit protein bS6 from Prochlorococcus marinus (strain MIT 9515).